A 312-amino-acid chain; its full sequence is 4-hydroxy-3-methylbut-2-enyl diphosphate reductase (312 aa).

C15 provides a ligand contact to [4Fe-4S] cluster. Residues H44 and H77 each coordinate (2E)-4-hydroxy-3-methylbut-2-enyl diphosphate. Dimethylallyl diphosphate contacts are provided by H44 and H77. Positions 44 and 77 each coordinate isopentenyl diphosphate. C99 serves as a coordination point for [4Fe-4S] cluster. H127 is a (2E)-4-hydroxy-3-methylbut-2-enyl diphosphate binding site. H127 is a binding site for dimethylallyl diphosphate. H127 is a binding site for isopentenyl diphosphate. The active-site Proton donor is the E129. T167 serves as a coordination point for (2E)-4-hydroxy-3-methylbut-2-enyl diphosphate. Position 197 (C197) interacts with [4Fe-4S] cluster. (2E)-4-hydroxy-3-methylbut-2-enyl diphosphate-binding residues include S225, S226, N227, and S269. Dimethylallyl diphosphate contacts are provided by S225, S226, N227, and S269. Isopentenyl diphosphate is bound by residues S225, S226, N227, and S269.

This sequence belongs to the IspH family. Requires [4Fe-4S] cluster as cofactor.

The enzyme catalyses isopentenyl diphosphate + 2 oxidized [2Fe-2S]-[ferredoxin] + H2O = (2E)-4-hydroxy-3-methylbut-2-enyl diphosphate + 2 reduced [2Fe-2S]-[ferredoxin] + 2 H(+). It carries out the reaction dimethylallyl diphosphate + 2 oxidized [2Fe-2S]-[ferredoxin] + H2O = (2E)-4-hydroxy-3-methylbut-2-enyl diphosphate + 2 reduced [2Fe-2S]-[ferredoxin] + 2 H(+). Its pathway is isoprenoid biosynthesis; dimethylallyl diphosphate biosynthesis; dimethylallyl diphosphate from (2E)-4-hydroxy-3-methylbutenyl diphosphate: step 1/1. The protein operates within isoprenoid biosynthesis; isopentenyl diphosphate biosynthesis via DXP pathway; isopentenyl diphosphate from 1-deoxy-D-xylulose 5-phosphate: step 6/6. In terms of biological role, catalyzes the conversion of 1-hydroxy-2-methyl-2-(E)-butenyl 4-diphosphate (HMBPP) into a mixture of isopentenyl diphosphate (IPP) and dimethylallyl diphosphate (DMAPP). Acts in the terminal step of the DOXP/MEP pathway for isoprenoid precursor biosynthesis. This is 4-hydroxy-3-methylbut-2-enyl diphosphate reductase from Aromatoleum aromaticum (strain DSM 19018 / LMG 30748 / EbN1) (Azoarcus sp. (strain EbN1)).